Consider the following 300-residue polypeptide: Putative lysophosphatidic acid:oleoyl-CoA acyltransferase (300 aa).

The chain crosses the membrane as a helical span at residues 32 to 52; that stretch reads WILIVVVMILRVPLCIISVTL. Residues 115 to 120 carry the HXXXXD motif motif; the sequence is HSSPLD.

This sequence belongs to the 1-acyl-sn-glycerol-3-phosphate acyltransferase family.

It is found in the lipid droplet. Its subcellular location is the endoplasmic reticulum membrane. The protein localises to the golgi apparatus membrane. It catalyses the reaction a 1-acyl-sn-glycero-3-phosphate + an acyl-CoA = a 1,2-diacyl-sn-glycero-3-phosphate + CoA. Acyl-CoA-dependent lysophosphatidic acid acyltransferase with preference for oleoyl-CoA. Involved in triacylglyceride homeostasis and lipid droplet formation. Involved in vacuolar protein sorting. The polypeptide is Putative lysophosphatidic acid:oleoyl-CoA acyltransferase (vps66) (Schizosaccharomyces pombe (strain 972 / ATCC 24843) (Fission yeast)).